A 319-amino-acid chain; its full sequence is Ribosomal RNA small subunit methyltransferase H (319 aa).

S-adenosyl-L-methionine contacts are provided by residues glycine 39–histidine 41, aspartate 59, phenylalanine 83, aspartate 104, and glutamine 111.

It belongs to the methyltransferase superfamily. RsmH family.

It is found in the cytoplasm. The catalysed reaction is cytidine(1402) in 16S rRNA + S-adenosyl-L-methionine = N(4)-methylcytidine(1402) in 16S rRNA + S-adenosyl-L-homocysteine + H(+). In terms of biological role, specifically methylates the N4 position of cytidine in position 1402 (C1402) of 16S rRNA. The polypeptide is Ribosomal RNA small subunit methyltransferase H (Ralstonia pickettii (strain 12D)).